Here is a 556-residue protein sequence, read N- to C-terminus: 2-succinyl-5-enolpyruvyl-6-hydroxy-3-cyclohexene-1-carboxylate synthase (556 aa).

It belongs to the TPP enzyme family. MenD subfamily. As to quaternary structure, homodimer. It depends on Mg(2+) as a cofactor. The cofactor is Mn(2+). Thiamine diphosphate is required as a cofactor.

The catalysed reaction is isochorismate + 2-oxoglutarate + H(+) = 5-enolpyruvoyl-6-hydroxy-2-succinyl-cyclohex-3-ene-1-carboxylate + CO2. It participates in quinol/quinone metabolism; 1,4-dihydroxy-2-naphthoate biosynthesis; 1,4-dihydroxy-2-naphthoate from chorismate: step 2/7. Its pathway is quinol/quinone metabolism; menaquinone biosynthesis. Functionally, catalyzes the thiamine diphosphate-dependent decarboxylation of 2-oxoglutarate and the subsequent addition of the resulting succinic semialdehyde-thiamine pyrophosphate anion to isochorismate to yield 2-succinyl-5-enolpyruvyl-6-hydroxy-3-cyclohexene-1-carboxylate (SEPHCHC). The sequence is that of 2-succinyl-5-enolpyruvyl-6-hydroxy-3-cyclohexene-1-carboxylate synthase from Escherichia coli (strain UTI89 / UPEC).